A 211-amino-acid chain; its full sequence is Thiamine-phosphate synthase (211 aa).

Residues 37 to 41 (QLRIK) and N69 contribute to the 4-amino-2-methyl-5-(diphosphooxymethyl)pyrimidine site. Residues D70 and D89 each coordinate Mg(2+). A 4-amino-2-methyl-5-(diphosphooxymethyl)pyrimidine-binding site is contributed by S108. Residue 134 to 136 (TQT) participates in 2-[(2R,5Z)-2-carboxy-4-methylthiazol-5(2H)-ylidene]ethyl phosphate binding. K137 is a binding site for 4-amino-2-methyl-5-(diphosphooxymethyl)pyrimidine. 2-[(2R,5Z)-2-carboxy-4-methylthiazol-5(2H)-ylidene]ethyl phosphate-binding positions include G166 and 186 to 187 (VS).

Belongs to the thiamine-phosphate synthase family. The cofactor is Mg(2+).

It carries out the reaction 2-[(2R,5Z)-2-carboxy-4-methylthiazol-5(2H)-ylidene]ethyl phosphate + 4-amino-2-methyl-5-(diphosphooxymethyl)pyrimidine + 2 H(+) = thiamine phosphate + CO2 + diphosphate. The catalysed reaction is 2-(2-carboxy-4-methylthiazol-5-yl)ethyl phosphate + 4-amino-2-methyl-5-(diphosphooxymethyl)pyrimidine + 2 H(+) = thiamine phosphate + CO2 + diphosphate. It catalyses the reaction 4-methyl-5-(2-phosphooxyethyl)-thiazole + 4-amino-2-methyl-5-(diphosphooxymethyl)pyrimidine + H(+) = thiamine phosphate + diphosphate. The protein operates within cofactor biosynthesis; thiamine diphosphate biosynthesis; thiamine phosphate from 4-amino-2-methyl-5-diphosphomethylpyrimidine and 4-methyl-5-(2-phosphoethyl)-thiazole: step 1/1. In terms of biological role, condenses 4-methyl-5-(beta-hydroxyethyl)thiazole monophosphate (THZ-P) and 2-methyl-4-amino-5-hydroxymethyl pyrimidine pyrophosphate (HMP-PP) to form thiamine monophosphate (TMP). The sequence is that of Thiamine-phosphate synthase from Salmonella choleraesuis (strain SC-B67).